A 450-amino-acid chain; its full sequence is Transcription factor AP-2 gamma (450 aa).

Lysine 10 participates in a covalent cross-link: Glycyl lysine isopeptide (Lys-Gly) (interchain with G-Cter in SUMO). Disordered stretches follow at residues 13-63 and 90-126; these read EDCE…FPPP and LHQP…GLLP. The PPxY motif motif lies at 59–64; the sequence is YFPPPY. The segment covering 95–110 has biased composition (polar residues); the sequence is PTGSQQQAWPGRQSQE. Phosphoserine; by PKA is present on serine 252. The H-S-H (helix-span-helix), dimerization stretch occupies residues 293–424; the sequence is RRKAAHVTLL…YIKEALIVID (132 aa). Residues 431 to 450 are disordered; the sequence is GDQSPADSNKTLEKMEKHRK. The residue at position 434 (serine 434) is a Phosphoserine. The span at 440–450 shows a compositional bias: basic and acidic residues; sequence KTLEKMEKHRK.

It belongs to the AP-2 family. As to quaternary structure, binds DNA as a dimer. Can form homodimers or heterodimers with other AP-2 family members. Interacts with WWOX. Interacts with UBE2I. Interacts with KCTD1; this interaction represses transcription activation. Interacts with CITED2 (via C-terminus); the interaction stimulates TFAP2B-transcriptional activity. Interacts with CITED4. Interacts with MTA1. In terms of processing, sumoylated on Lys-10; which inhibits transcriptional activity.

It is found in the nucleus. Sequence-specific DNA-binding transcription factor that interacts with cellular enhancer elements to regulate transcription of selected genes, and which plays a key role in early embryonic development. AP-2 factors bind to the consensus sequence 5'-GCCNNNGGC-3' and activate genes involved in a large spectrum of important biological functions. TFAP2C plays a key role in early embryonic development by regulating both inner cell mass (ICM) and trophectoderm differentiation. At the 8-cell stage, during morula development, controls expression of cell-polarity genes. Upon trophoblast commitment, binds to late trophectoderm genes in blastocysts together with CDX2, and later to extra-embryonic ectoderm genes together with SOX2. Binds to both closed and open chromatin with other transcription factors. Involved in the MTA1-mediated epigenetic regulation of ESR1 expression in breast cancer. The polypeptide is Transcription factor AP-2 gamma (TFAP2C) (Homo sapiens (Human)).